Reading from the N-terminus, the 434-residue chain is Putative nuclease OPG089 (434 aa).

It belongs to the XPG/RAD2 endonuclease family. FEN1 subfamily. Mg(2+) serves as cofactor.

The protein resides in the virion. Its function is as follows. Putative nuclease that seems to be required for double-strand break repair, homologous recombination, and production of full-length viral genomic DNA. The chain is Putative nuclease OPG089 (OPG089) from Monkeypox virus.